Here is a 249-residue protein sequence, read N- to C-terminus: Probable transcriptional regulatory protein HY04AAS1_0501 (249 aa).

It belongs to the TACO1 family.

Its subcellular location is the cytoplasm. This Hydrogenobaculum sp. (strain Y04AAS1) protein is Probable transcriptional regulatory protein HY04AAS1_0501.